The sequence spans 203 residues: Urease accessory protein UreG (203 aa).

Glycine 12–threonine 19 is a GTP binding site.

Belongs to the SIMIBI class G3E GTPase family. UreG subfamily. Homodimer. UreD, UreF and UreG form a complex that acts as a GTP-hydrolysis-dependent molecular chaperone, activating the urease apoprotein by helping to assemble the nickel containing metallocenter of UreC. The UreE protein probably delivers the nickel.

It localises to the cytoplasm. Its function is as follows. Facilitates the functional incorporation of the urease nickel metallocenter. This process requires GTP hydrolysis, probably effectuated by UreG. The chain is Urease accessory protein UreG from Nitrosococcus oceani (strain ATCC 19707 / BCRC 17464 / JCM 30415 / NCIMB 11848 / C-107).